A 329-amino-acid chain; its full sequence is uncharacterized protein (329 aa).

To type I restriction system adenine methylases.

This is an uncharacterized protein from Bacillus subtilis (strain 168).